The chain runs to 147 residues: Hemoglobin subunit beta (147 aa).

The 145-residue stretch at 3–147 (HWTAEEKQLI…VAHALARKYH (145 aa)) folds into the Globin domain. Heme b contacts are provided by H64 and H93.

It belongs to the globin family. In terms of assembly, heterotetramer of two alpha chains and two beta chains. In terms of tissue distribution, red blood cells.

Its function is as follows. Involved in oxygen transport from the lung to the various peripheral tissues. The polypeptide is Hemoglobin subunit beta (HBB) (Cairina moschata (Muscovy duck)).